Here is a 101-residue protein sequence, read N- to C-terminus: NAD(P)H-quinone oxidoreductase subunit 4L, chloroplastic (101 aa).

3 helical membrane-spanning segments follow: residues 2-22 (ILEH…YGLI), 32-52 (MCLE…SDFF), and 61-81 (IFSI…LAIV).

This sequence belongs to the complex I subunit 4L family. As to quaternary structure, NDH is composed of at least 16 different subunits, 5 of which are encoded in the nucleus.

It is found in the plastid. The protein localises to the chloroplast thylakoid membrane. It catalyses the reaction a plastoquinone + NADH + (n+1) H(+)(in) = a plastoquinol + NAD(+) + n H(+)(out). The catalysed reaction is a plastoquinone + NADPH + (n+1) H(+)(in) = a plastoquinol + NADP(+) + n H(+)(out). NDH shuttles electrons from NAD(P)H:plastoquinone, via FMN and iron-sulfur (Fe-S) centers, to quinones in the photosynthetic chain and possibly in a chloroplast respiratory chain. The immediate electron acceptor for the enzyme in this species is believed to be plastoquinone. Couples the redox reaction to proton translocation, and thus conserves the redox energy in a proton gradient. The chain is NAD(P)H-quinone oxidoreductase subunit 4L, chloroplastic from Oenothera argillicola (Appalachian evening primrose).